A 117-amino-acid chain; its full sequence is Cell division protein FtsB (117 aa).

The Cytoplasmic segment spans residues 1 to 6 (MRDWRW). The helical transmembrane segment at 7–24 (MLLVLALLLGWLQYRFWF) threads the bilayer. Over 25 to 117 (GPGNSGEVMM…QVGDHPADVP (93 aa)) the chain is Periplasmic. Positions 29–69 (SGEVMMLEAQVANQERDNEGLQQRNDALAAEVKDLKEGQSA) form a coiled coil.

The protein belongs to the FtsB family. As to quaternary structure, part of a complex composed of FtsB, FtsL and FtsQ.

It is found in the cell inner membrane. Essential cell division protein. May link together the upstream cell division proteins, which are predominantly cytoplasmic, with the downstream cell division proteins, which are predominantly periplasmic. The sequence is that of Cell division protein FtsB from Stenotrophomonas maltophilia (strain K279a).